The sequence spans 207 residues: Galactoside O-acetyltransferase (207 aa).

Asn-87 lines the acetyl-CoA pocket. His-117 (proton donor/acceptor) is an active-site residue. Acetyl-CoA is bound by residues Ala-144, Ala-162, 167 to 168 (TK), and Arg-185.

The protein belongs to the transferase hexapeptide repeat family. As to quaternary structure, homotrimer.

It is found in the cytoplasm. The catalysed reaction is a beta-D-galactoside + acetyl-CoA = a 6-acetyl-beta-D-galactoside + CoA. The sequence is that of Galactoside O-acetyltransferase (lacA) from Lactococcus lactis subsp. lactis (strain IL1403) (Streptococcus lactis).